We begin with the raw amino-acid sequence, 138 residues long: Putative membrane protein ORF6 (138 aa).

A run of 2 helical transmembrane segments spans residues 4-20 (LTIIFLLSGLTAYHAVL) and 37-53 (VVVLVMIGALLTLLMTI).

The protein localises to the membrane. This chain is Putative membrane protein ORF6 (ORF6), found in Ictalurid herpesvirus 1 (strain Auburn) (IcHV-1).